Here is a 94-residue protein sequence, read N- to C-terminus: ATP synthase subunit c (94 aa).

The next 2 helical transmembrane spans lie at 15-35 and 58-78; these read IGVG…WGLI and FIFA…AMWF.

Belongs to the ATPase C chain family. In terms of assembly, F-type ATPases have 2 components, F(1) - the catalytic core - and F(0) - the membrane proton channel. F(1) has five subunits: alpha(3), beta(3), gamma(1), delta(1), epsilon(1). F(0) has three main subunits: a(1), b(2) and c(10-14). The alpha and beta chains form an alternating ring which encloses part of the gamma chain. F(1) is attached to F(0) by a central stalk formed by the gamma and epsilon chains, while a peripheral stalk is formed by the delta and b chains.

It localises to the cell inner membrane. F(1)F(0) ATP synthase produces ATP from ADP in the presence of a proton or sodium gradient. F-type ATPases consist of two structural domains, F(1) containing the extramembraneous catalytic core and F(0) containing the membrane proton channel, linked together by a central stalk and a peripheral stalk. During catalysis, ATP synthesis in the catalytic domain of F(1) is coupled via a rotary mechanism of the central stalk subunits to proton translocation. Its function is as follows. Key component of the F(0) channel; it plays a direct role in translocation across the membrane. A homomeric c-ring of between 10-14 subunits forms the central stalk rotor element with the F(1) delta and epsilon subunits. In Hydrogenovibrio crunogenus (strain DSM 25203 / XCL-2) (Thiomicrospira crunogena), this protein is ATP synthase subunit c.